We begin with the raw amino-acid sequence, 220 residues long: Small ribosomal subunit protein uS3 (220 aa).

One can recognise a KH type-2 domain in the interval 38-106 (IRNFINKKLQ…QVHINIVEIK (69 aa)).

It belongs to the universal ribosomal protein uS3 family. In terms of assembly, part of the 30S ribosomal subunit. Forms a tight complex with proteins S10 and S14.

Functionally, binds the lower part of the 30S subunit head. Binds mRNA in the 70S ribosome, positioning it for translation. The sequence is that of Small ribosomal subunit protein uS3 from Lacticaseibacillus paracasei (strain ATCC 334 / BCRC 17002 / CCUG 31169 / CIP 107868 / KCTC 3260 / NRRL B-441) (Lactobacillus paracasei).